The chain runs to 407 residues: Na(+)-translocating NADH-quinone reductase subunit F (407 aa).

Residues 3-23 (ITLGIAMFTVIVLALAVLILF) traverse the membrane as a helical segment. Residues 32-126 (GDITIEINDD…SMKIELPEEV (95 aa)) enclose the 2Fe-2S ferredoxin-type domain. 4 residues coordinate [2Fe-2S] cluster: Cys-69, Cys-75, Cys-78, and Cys-110. The 141-residue stretch at 129–269 (VKKWECTVIS…SGPFGEFFAK (141 aa)) folds into the FAD-binding FR-type domain.

It belongs to the NqrF family. In terms of assembly, composed of six subunits; NqrA, NqrB, NqrC, NqrD, NqrE and NqrF. [2Fe-2S] cluster is required as a cofactor. Requires FAD as cofactor.

The protein localises to the cell inner membrane. It catalyses the reaction a ubiquinone + n Na(+)(in) + NADH + H(+) = a ubiquinol + n Na(+)(out) + NAD(+). In terms of biological role, NQR complex catalyzes the reduction of ubiquinone-1 to ubiquinol by two successive reactions, coupled with the transport of Na(+) ions from the cytoplasm to the periplasm. The first step is catalyzed by NqrF, which accepts electrons from NADH and reduces ubiquinone-1 to ubisemiquinone by a one-electron transfer pathway. This chain is Na(+)-translocating NADH-quinone reductase subunit F, found in Histophilus somni (strain 129Pt) (Haemophilus somnus).